The chain runs to 505 residues: MKKRQSGVLMHISSLPGAYGIGSFGQSAYDFVDFLVRTKQRYWQILPLGATSYGDSPYQSFSAFAGNTHFIDLDILVEQGLLEASDLEGVDFGSDASEVDYAKIYYARRPLLEKAVKRFFEVGDVKDFEKFAQDNQSWLELFAEYMAIKEYFDNLAWTEWPDADARARKASALESYREQLADKLVYHRVTQYFFFQQWLKLKAYANDNHIEIVGDMPIYVAEDSSDMWANPHLFKTDVNGKATCIAGCPPDEFSVTGQLWGNPIYDWEAMDKDGYKWWIERLRESFKIYDIVRIDHFRGFESYWEIPAGSDTAAPGEWVKGPGYKLFAAVKEELGELNIIAEDLGFMTDEVIELRERTGFPGMKILQFAFNPEDESIDSPHLAPANSVMYTGTHDNNTVLGWYRNEIDDATREYMARYTNRKEYETVVHAMLRTVFSSVSFMAIATMQDLLELDEAARMNFPSTLGGNWSWRMTEDQLTPAVEEGLLDLTTIYRRINENLVDLKK.

The protein belongs to the disproportionating enzyme family.

Its subcellular location is the cytoplasm. The enzyme catalyses Transfers a segment of a (1-&gt;4)-alpha-D-glucan to a new position in an acceptor, which may be glucose or a (1-&gt;4)-alpha-D-glucan.. The protein is 4-alpha-glucanotransferase (malQ) of Streptococcus pneumoniae serotype 4 (strain ATCC BAA-334 / TIGR4).